A 436-amino-acid chain; its full sequence is Chorismate synthase, chloroplastic (436 aa).

The disordered stretch occupies residues 1 to 24 (MASSSLTSKSILGSTKLGSSSLPS). A chloroplast-targeting transit peptide spans 1–50 (MASSSLTSKSILGSTKLGSSSLPSELRRLSSPAVQISLRTQTRKNFQIQA).

This sequence belongs to the chorismate synthase family. Homotetramer. FMNH2 serves as cofactor.

Its subcellular location is the plastid. The protein localises to the chloroplast. The enzyme catalyses 5-O-(1-carboxyvinyl)-3-phosphoshikimate = chorismate + phosphate. The protein operates within metabolic intermediate biosynthesis; chorismate biosynthesis; chorismate from D-erythrose 4-phosphate and phosphoenolpyruvate: step 7/7. In terms of biological role, catalyzes the last common step of the biosynthesis of aromatic amino acids, produced via the shikimic acid pathway. The sequence is that of Chorismate synthase, chloroplastic (EMB1144) from Arabidopsis thaliana (Mouse-ear cress).